The sequence spans 112 residues: Transcriptional regulator ClgR (112 aa).

In terms of domain architecture, HTH cro/C1-type spans 13–67; it reads LRGARMSQGRTLREVSDSARVSLGYLSEIERGRKEPSSELLSAICTALQLPLSVV. Residues 24–43 constitute a DNA-binding region (H-T-H motif); that stretch reads LREVSDSARVSLGYLSEIER.

Key stress-response regulator that plays an important role in multiple regulatory networks in response to different stress conditions. Required to manage host-derived stress during infection. Plays a role during hypoxia and reaeration. Controls the expression of many genes involved in heat shock, virulence, lipid metabolism, transport or regulation, including clpP1, clpP2, clpC1, hsp, groES, otsA, pknD, prcA and prcB. May function by protecting intracellular redox potential and by inducing the expression of trehalose, a constituent of cell walls that is important for defense against cell-surface and oxidative stress. Also performs different functions during stress response and is important for the pathogenicity of M.tuberculosis in vivo, regardless of the induction of the Clp proteolytic pathway. May directly activate SigE and/or SigH. In Mycobacterium tuberculosis (strain CDC 1551 / Oshkosh), this protein is Transcriptional regulator ClgR (clgR).